The primary structure comprises 186 residues: Ribosome-recycling factor (186 aa).

The protein belongs to the RRF family.

The protein localises to the cytoplasm. In terms of biological role, responsible for the release of ribosomes from messenger RNA at the termination of protein biosynthesis. May increase the efficiency of translation by recycling ribosomes from one round of translation to another. This is Ribosome-recycling factor from Prosthecochloris aestuarii (strain DSM 271 / SK 413).